The following is an 87-amino-acid chain: DNA-directed RNA polymerase subunit omega (87 aa).

The protein belongs to the RNA polymerase subunit omega family. As to quaternary structure, the RNAP catalytic core consists of 2 alpha, 1 beta, 1 beta' and 1 omega subunit. When a sigma factor is associated with the core the holoenzyme is formed, which can initiate transcription.

The catalysed reaction is RNA(n) + a ribonucleoside 5'-triphosphate = RNA(n+1) + diphosphate. Its function is as follows. Promotes RNA polymerase assembly. Latches the N- and C-terminal regions of the beta' subunit thereby facilitating its interaction with the beta and alpha subunits. In Azotobacter vinelandii (strain DJ / ATCC BAA-1303), this protein is DNA-directed RNA polymerase subunit omega.